Here is a 404-residue protein sequence, read N- to C-terminus: Adenosylhomocysteinase (404 aa).

Substrate is bound by residues Asp114 and Glu139. 140–142 (TTT) is a binding site for NAD(+). Positions 169 and 173 each coordinate substrate. NAD(+) contacts are provided by residues Asn174, 203 to 208 (GYGWCG), Glu226, Asn261, 282 to 284 (AGH), and Asn329.

The protein belongs to the adenosylhomocysteinase family. NAD(+) serves as cofactor.

The protein resides in the cytoplasm. The enzyme catalyses S-adenosyl-L-homocysteine + H2O = L-homocysteine + adenosine. It functions in the pathway amino-acid biosynthesis; L-homocysteine biosynthesis; L-homocysteine from S-adenosyl-L-homocysteine: step 1/1. In terms of biological role, may play a key role in the regulation of the intracellular concentration of adenosylhomocysteine. This Thermotoga maritima (strain ATCC 43589 / DSM 3109 / JCM 10099 / NBRC 100826 / MSB8) protein is Adenosylhomocysteinase.